We begin with the raw amino-acid sequence, 290 residues long: MSVRRGRRPARPGTRLSWLLCCSALLSPAAGYVIVSSVSWAVTNEVDEELDSASTEEAMPALLEDSGSIWQQSFPASAHKEDAHLRPRAGAARARPPPAPPGMFSYRREGGQTASAPPGPRLRAATARSLAHASVWGCLATVSTHKKIQGLPFGNCLPVSDGPFNNSTGIPFFYMTAKDPVVADLMKNPMASLMLPESEGEFCRKNIVDPEDPRCVQLTLTGQMIAVSPEEVEFAKQAMFSRHPGMRKWPRQYEWFFMKMRIEHIWLQKWYGGASSISREEYFKAVPRKA.

The first 31 residues, 1–31 (MSVRRGRRPARPGTRLSWLLCCSALLSPAAG), serve as a signal peptide directing secretion. Residues asparagine 165 and asparagine 166 are each glycosylated (N-linked (GlcNAc...) asparagine).

Belongs to the CREG family. Post-translationally, it is not sure whether N-glycosylation is on Asn-165 and/or Asn-166. Brain specific mainly in the limbic system and faintly in the spinal cord but not in cerebellum.

It is found in the secreted. The chain is Protein CREG2 (CREG2) from Homo sapiens (Human).